Here is a 602-residue protein sequence, read N- to C-terminus: PEX5-related protein (602 aa).

Disordered stretches follow at residues 94 to 140 and 167 to 206; these read VSQT…PETS and HLMA…LNSE. S181, S229, S233, and S237 each carry phosphoserine. TPR repeat units follow at residues 302–335, 336–369, and 371–403; these read WPGA…DPGN, AEAW…QPNN, and KALM…NPKY. Phosphoserine occurs at positions 421 and 423. TPR repeat units lie at residues 450-483, 485-517, and 519-551; these read PDLQ…RPED, SLWN…QPGF, and RSRY…QRKS.

The protein belongs to the peroxisomal targeting signal receptor family. Forms an obligate 4:4 complex with HCN2. Interacts with RAB8B. Interacts with HCN3. Interacts with HCN4 with a 4:4 HCN4:PEX5L stoichiometry; reduces the effects of cAMP on the voltage-dependence and rate of activation of HCN4. As to expression, brain specific.

Its subcellular location is the cytoplasm. The protein localises to the membrane. Accessory subunit of hyperpolarization-activated cyclic nucleotide-gated (HCN) channels, regulating their cell-surface expression and cyclic nucleotide dependence. The chain is PEX5-related protein (Pex5l) from Rattus norvegicus (Rat).